Consider the following 102-residue polypeptide: Putative pterin-4-alpha-carbinolamine dehydratase (102 aa).

Belongs to the pterin-4-alpha-carbinolamine dehydratase family.

The enzyme catalyses (4aS,6R)-4a-hydroxy-L-erythro-5,6,7,8-tetrahydrobiopterin = (6R)-L-erythro-6,7-dihydrobiopterin + H2O. In Burkholderia ambifaria (strain ATCC BAA-244 / DSM 16087 / CCUG 44356 / LMG 19182 / AMMD) (Burkholderia cepacia (strain AMMD)), this protein is Putative pterin-4-alpha-carbinolamine dehydratase.